Reading from the N-terminus, the 183-residue chain is Ribosome-recycling factor (183 aa).

Belongs to the RRF family.

The protein resides in the cytoplasm. Functionally, responsible for the release of ribosomes from messenger RNA at the termination of protein biosynthesis. May increase the efficiency of translation by recycling ribosomes from one round of translation to another. In Bifidobacterium longum (strain DJO10A), this protein is Ribosome-recycling factor.